Consider the following 141-residue polypeptide: SsrA-binding protein (141 aa).

It belongs to the SmpB family.

The protein resides in the cytoplasm. In terms of biological role, required for rescue of stalled ribosomes mediated by trans-translation. Binds to transfer-messenger RNA (tmRNA), required for stable association of tmRNA with ribosomes. tmRNA and SmpB together mimic tRNA shape, replacing the anticodon stem-loop with SmpB. tmRNA is encoded by the ssrA gene; the 2 termini fold to resemble tRNA(Ala) and it encodes a 'tag peptide', a short internal open reading frame. During trans-translation Ala-aminoacylated tmRNA acts like a tRNA, entering the A-site of stalled ribosomes, displacing the stalled mRNA. The ribosome then switches to translate the ORF on the tmRNA; the nascent peptide is terminated with the 'tag peptide' encoded by the tmRNA and targeted for degradation. The ribosome is freed to recommence translation, which seems to be the essential function of trans-translation. This Ureaplasma parvum serovar 3 (strain ATCC 27815 / 27 / NCTC 11736) protein is SsrA-binding protein.